The primary structure comprises 478 residues: Dynein regulatory complex subunit 4 (478 aa).

A compositionally biased stretch (basic residues) spans 1-12; the sequence is MAPKKKGKKGKA. A disordered region spans residues 1–33; it reads MAPKKKGKKGKAKGTPIVDGLAPEDMSKEQVEE. The segment at 1-114 is regulates microtubule-binding; sequence MAPKKKGKKG…LLYEHQNNLT (114 aa). Residues 115 to 258 form a microtubule-binding region; the sequence is EMKAEGTVVM…NSLKEQMEDM (144 aa). Positions 242–427 form a coiled coil; sequence LNNLALINSL…KDLQYELAQV (186 aa). The tract at residues 357 to 478 is interaction with SMO; it reads QQKTGFKNLV…GPAGLVGTPT (122 aa).

Belongs to the DRC4 family. In terms of assembly, component of the nexin-dynein regulatory complex (N-DRC). Interacts with microtubules. Interacts with SMO. Interacts (via coiled-coil domains) with RAB3B (in GTP-bound form). Interacts with DRC1. Interacts with DRC7. In terms of tissue distribution, expressed in respiratory epithelial cells (at protein level). Expressed in the heart, skeletal muscle, pancreas, liver, brain, trachea and lung. Weakly or not expressed in placenta and kidney.

Its subcellular location is the cytoplasm. The protein localises to the cytoskeleton. It localises to the cell projection. The protein resides in the cilium. It is found in the flagellum. Its subcellular location is the cilium axoneme. The protein localises to the cilium basal body. It localises to the golgi apparatus. The protein resides in the flagellum axoneme. Its function is as follows. Component of the nexin-dynein regulatory complex (N-DRC), a key regulator of ciliary/flagellar motility which maintains the alignment and integrity of the distal axoneme and regulates microtubule sliding in motile axonemes. Plays an important role in the assembly of the N-DRC linker. Plays dual roles at both the primary (or non-motile) cilia to regulate hedgehog signaling and in motile cilia to coordinate cilia movement. Required for proper motile cilia functioning. Positively regulates ciliary smoothened (SMO)-dependent Hedgehog (Hh) signaling pathway by facilitating the trafficking of SMO into the cilium and the stimulation of SMO activity in a GRK2-dependent manner. This chain is Dynein regulatory complex subunit 4 (GAS8), found in Homo sapiens (Human).